Here is a 364-residue protein sequence, read N- to C-terminus: tRNA 2-selenouridine synthase (364 aa).

The Rhodanese domain maps to 14–137 (LLADTPLIDV…LRQTAIQATW (124 aa)). The active-site S-selanylcysteine intermediate is the Cys-97.

It belongs to the SelU family. Monomer.

It catalyses the reaction 5-methylaminomethyl-2-thiouridine(34) in tRNA + selenophosphate + (2E)-geranyl diphosphate + H2O + H(+) = 5-methylaminomethyl-2-selenouridine(34) in tRNA + (2E)-thiogeraniol + phosphate + diphosphate. It carries out the reaction 5-methylaminomethyl-2-thiouridine(34) in tRNA + (2E)-geranyl diphosphate = 5-methylaminomethyl-S-(2E)-geranyl-thiouridine(34) in tRNA + diphosphate. The enzyme catalyses 5-methylaminomethyl-S-(2E)-geranyl-thiouridine(34) in tRNA + selenophosphate + H(+) = 5-methylaminomethyl-2-(Se-phospho)selenouridine(34) in tRNA + (2E)-thiogeraniol. The catalysed reaction is 5-methylaminomethyl-2-(Se-phospho)selenouridine(34) in tRNA + H2O = 5-methylaminomethyl-2-selenouridine(34) in tRNA + phosphate. Its function is as follows. Involved in the post-transcriptional modification of the uridine at the wobble position (U34) of tRNA(Lys), tRNA(Glu) and tRNA(Gln). Catalyzes the conversion of 2-thiouridine (S2U-RNA) to 2-selenouridine (Se2U-RNA). Acts in a two-step process involving geranylation of 2-thiouridine (S2U) to S-geranyl-2-thiouridine (geS2U) and subsequent selenation of the latter derivative to 2-selenouridine (Se2U) in the tRNA chain. The protein is tRNA 2-selenouridine synthase of Salmonella heidelberg (strain SL476).